Consider the following 433-residue polypeptide: 23S rRNA (uracil(1939)-C(5))-methyltransferase RlmD (433 aa).

Residues 10–68 (RTTTRQIITVSVNDLDSFGQGVARHNGKTLFIPGLLPQENAEVTVTEDKKQYARAKVVR) enclose the TRAM domain. Positions 81, 87, 90, and 162 each coordinate [4Fe-4S] cluster. Residues Q265, F294, N299, E315, N342, and D363 each contribute to the S-adenosyl-L-methionine site. Residue C389 is the Nucleophile of the active site.

It belongs to the class I-like SAM-binding methyltransferase superfamily. RNA M5U methyltransferase family. RlmD subfamily.

It carries out the reaction uridine(1939) in 23S rRNA + S-adenosyl-L-methionine = 5-methyluridine(1939) in 23S rRNA + S-adenosyl-L-homocysteine + H(+). In terms of biological role, catalyzes the formation of 5-methyl-uridine at position 1939 (m5U1939) in 23S rRNA. The polypeptide is 23S rRNA (uracil(1939)-C(5))-methyltransferase RlmD (Escherichia coli O157:H7).